We begin with the raw amino-acid sequence, 790 residues long: MAAQALAAQAVASRLQRQEEDIRWLCAEVQRLRDEQLRGPERGQAEGPRLTREVAQLQAENRDLHQRLCGLRLRLAEQRRTEAGRAAAHEPPTQNQEKDTKKKRLKQSEPGREVKQPNFIKERLQLFETLKTDHQLLPATQEKKNTNNVISVRVAGGKTVQGERWKTTPYQVAAGISKELAEHTVIAKVNGVLWDLDRPLEGDSTVELLMFDNEEAQAVYWHSSAHILGEAMELYYGGHLCYGPPIENGFYYDMFIEDRVVSSTELSALENICKTIIKEKQPFERLEVSKDTLLEMFKYNKFKCRILKEKVDTPTTTVYRCGPLIDLCKGPHVRHTGKIKAIKIFKNSSTYWEGNPEMETLQRIYGISFPDSKMMKDWEKFQEEAKSRDHRKIGKEQELFFFHDLSPGSCFFLPRGAFIYNALMDFIREEYHKRNFTEVLSPNMYNSKLWETSGHWQHYSNNMFTFDVEKDTFALKPMNCPGHCLMFAHRPRSWREMPVRFADFGVLHRNELSGTLSGLTRVRRFQQDDAHIFCMVEQIEEEIKGCLHFLQSVYSTFGFSFQLNLSTRPEHFLGEIEIWDEAERQLQNSLVEFGKPWKINPGDGAFYGPKIDIKIKDAIGRYHQCATIQLDFQLPIRFNLTYVSKDGDDKNRPVIIHRAILGSVERMIAILSENYGGKWPLWLSPRQVMVIPVGPACENYALQVSKECFEEGFMADVDLDDSCTLNKKIRNAQLAQYNFILVVGEKEKINNAVNVRTRDNKIHGEISIASVIEKLKNLKKSRTLNAEEDF.

N-acetylalanine is present on A2. Positions 13 to 68 form a coiled coil; it reads SRLQRQEEDIRWLCAEVQRLRDEQLRGPERGQAEGPRLTREVAQLQAENRDLHQRL. The disordered stretch occupies residues 80–117; it reads RTEAGRAAAHEPPTQNQEKDTKKKRLKQSEPGREVKQP. Residues 96–117 are compositionally biased toward basic and acidic residues; it reads QEKDTKKKRLKQSEPGREVKQP. In terms of domain architecture, TGS spans 148 to 210; sequence NVISVRVAGG…EGDSTVELLM (63 aa). S441 bears the Phosphoserine mark. The Nuclear localization signal motif lies at 774-780; that stretch reads KLKNLKK.

Belongs to the class-II aminoacyl-tRNA synthetase family. In terms of assembly, may be a component of the multisynthetase complex (MSC), a large multi-subunit complex which contains at least eight different aminoacyl-tRNA synthetases plus three auxillary subunits AIMP1, AIMP2 and EEF1E1. Interacts with the MSC components EPRS1, AIMP1, AIMP2 and KARS1. As to expression, ubiquitous (at protein level). Strongly expressed in muscle (at protein level). Moderately expressed in heart and liver (at protein level). Weakly expressed in stomach, kidney, testis, spleen, brain, fat and lung (at protein level).

The protein resides in the cytoplasm. It is found in the nucleus. It carries out the reaction tRNA(Thr) + L-threonine + ATP = L-threonyl-tRNA(Thr) + AMP + diphosphate + H(+). Catalyzes the attachment of threonine to tRNA(Thr) in a two-step reaction: threonine is first activated by ATP to form Thr-AMP and then transferred to the acceptor end of tRNA(Thr). Also edits incorrectly charged tRNA(Thr) via its editing domain, at the post-transfer stage. The sequence is that of Threonine--tRNA ligase 2, cytoplasmic (Tars3) from Mus musculus (Mouse).